The sequence spans 576 residues: MYRTHTCGELRGTDEGKNVILSGWIERIRDLGGVKFIVLRDRYGKTQVVVNPDSPVYPIVNNISREYVIQVEGIVRKRPAEAITPEPTGEIEIVASELKILSKSELPPFYPGDDVSEEMRLKYRYLDIRNPKMMNNLILRHKLAFATREYLSNNNFLEVETPYLTKSTPEGARDFLVPSRLKKGNFYALPQSPQLFKQILMISGIDRYFQIVRCFRDEDLRADRQPEFTQIDIEMSFVHMEDVINLAENLIRYIYKAIGIELPEKFDRITYEEAMEKYGSDKPDRRYGMEMVDLTEFFKNSDFKIIKEVLERGGSVKGFKANIPMSRKIADEYSEFVKGFGLGGVLWFKLENGQITSTTAKYLENEYKAIAEKYNMNEGEVFIIAAHDNRERMNEALGALRLKVGKQYVKVSGFDALWVVDFPFLEWSEEEGRFVARHHPFTMPYIEDLEGGVELSKVRAHAYDMVINGFEVGGGSIRIHRRDIQEKVFDIIGLTKEEAKEKFGFFLDALQYGVPPHGGIAFGLDRLAAIAAGVDNIREVIAFPKTSSGTCLLTNAPSAVTQFQLDELGIALKQSQ.

An L-aspartate-binding site is contributed by glutamate 170. Positions 194 to 197 (QLFK) are aspartate. Arginine 216 is an L-aspartate binding site. ATP is bound by residues 216–218 (RDE) and glutamine 225. Histidine 438 is a binding site for L-aspartate. Glutamate 471 serves as a coordination point for ATP. An L-aspartate-binding site is contributed by arginine 478. An ATP-binding site is contributed by 523-526 (GLDR).

This sequence belongs to the class-II aminoacyl-tRNA synthetase family. Type 1 subfamily. Homodimer.

The protein resides in the cytoplasm. The enzyme catalyses tRNA(Asp) + L-aspartate + ATP = L-aspartyl-tRNA(Asp) + AMP + diphosphate. In terms of biological role, catalyzes the attachment of L-aspartate to tRNA(Asp) in a two-step reaction: L-aspartate is first activated by ATP to form Asp-AMP and then transferred to the acceptor end of tRNA(Asp). The sequence is that of Aspartate--tRNA ligase from Fervidobacterium nodosum (strain ATCC 35602 / DSM 5306 / Rt17-B1).